The sequence spans 208 residues: Pyridoxine/pyridoxamine 5'-phosphate oxidase (208 aa).

Residues 55–60, 70–71, Lys-76, Lys-77, and Gln-99 each bind FMN; these read RMVLLK and YT. Lys-60 serves as a coordination point for substrate. Residues Tyr-117, Arg-121, and Ser-125 each coordinate substrate. FMN-binding positions include 134 to 135 and Trp-179; that span reads QS. Residue 185–187 participates in substrate binding; the sequence is RLH. Arg-189 provides a ligand contact to FMN.

It belongs to the pyridoxamine 5'-phosphate oxidase family. Homodimer. FMN is required as a cofactor.

The catalysed reaction is pyridoxamine 5'-phosphate + O2 + H2O = pyridoxal 5'-phosphate + H2O2 + NH4(+). It carries out the reaction pyridoxine 5'-phosphate + O2 = pyridoxal 5'-phosphate + H2O2. Its pathway is cofactor metabolism; pyridoxal 5'-phosphate salvage; pyridoxal 5'-phosphate from pyridoxamine 5'-phosphate: step 1/1. It participates in cofactor metabolism; pyridoxal 5'-phosphate salvage; pyridoxal 5'-phosphate from pyridoxine 5'-phosphate: step 1/1. In terms of biological role, catalyzes the oxidation of either pyridoxine 5'-phosphate (PNP) or pyridoxamine 5'-phosphate (PMP) into pyridoxal 5'-phosphate (PLP). This is Pyridoxine/pyridoxamine 5'-phosphate oxidase from Brucella abortus biovar 1 (strain 9-941).